The sequence spans 178 residues: Large ribosomal subunit protein uL6 (178 aa).

It belongs to the universal ribosomal protein uL6 family. As to quaternary structure, part of the 50S ribosomal subunit.

Its function is as follows. This protein binds to the 23S rRNA, and is important in its secondary structure. It is located near the subunit interface in the base of the L7/L12 stalk, and near the tRNA binding site of the peptidyltransferase center. This Listeria monocytogenes serotype 4a (strain HCC23) protein is Large ribosomal subunit protein uL6.